The sequence spans 524 residues: Chitinase D (524 aa).

The signal sequence occupies residues M1–A30. The region spanning V95 to G180 is the Fibronectin type-III domain. The region spanning K190–L514 is the GH18 domain. Residue E303 is the Proton donor of the active site.

It belongs to the glycosyl hydrolase 18 family. Chitinase class II subfamily.

It carries out the reaction Random endo-hydrolysis of N-acetyl-beta-D-glucosaminide (1-&gt;4)-beta-linkages in chitin and chitodextrins.. The polypeptide is Chitinase D (chiD) (Niallia circulans (Bacillus circulans)).